The following is a 112-amino-acid chain: uncharacterized protein (112 aa).

Transmembrane regions (helical) follow at residues 55–75 (LLEI…PTLF) and 91–111 (LIML…LLLL).

Its subcellular location is the membrane. This is an uncharacterized protein from Saccharomyces cerevisiae (strain ATCC 204508 / S288c) (Baker's yeast).